A 156-amino-acid chain; its full sequence is Large ribosomal subunit protein uL22c (156 aa).

Belongs to the universal ribosomal protein uL22 family. Part of the 50S ribosomal subunit.

It localises to the plastid. It is found in the chloroplast. Functionally, this protein binds specifically to 23S rRNA. In terms of biological role, the globular domain of the protein is located near the polypeptide exit tunnel on the outside of the subunit, while an extended beta-hairpin is found that lines the wall of the exit tunnel in the center of the 70S ribosome. This chain is Large ribosomal subunit protein uL22c (rpl22), found in Buxus microphylla (Littleleaf boxwood).